The following is a 300-amino-acid chain: UPF0282 protein TGAM_0379 (300 aa).

Belongs to the UPF0282 family.

This is UPF0282 protein TGAM_0379 from Thermococcus gammatolerans (strain DSM 15229 / JCM 11827 / EJ3).